Reading from the N-terminus, the 239-residue chain is Lactate utilization protein A (239 aa).

This sequence belongs to the LutA/YkgE family.

Functionally, is involved in L-lactate degradation and allows cells to grow with lactate as the sole carbon source. This chain is Lactate utilization protein A, found in Bacillus cytotoxicus (strain DSM 22905 / CIP 110041 / 391-98 / NVH 391-98).